Here is a 437-residue protein sequence, read N- to C-terminus: Leucine-rich repeat flightless-interacting protein 2 (437 aa).

Position 18 is a phosphoserine (Ser-18). Positions 22 to 49 (EALSNIAREAEARLAAKRAARAEARDIR) form a coiled coil. A compositionally biased stretch (basic and acidic residues) spans 33–62 (ARLAAKRAARAEARDIRMRELERQQRESSS). A disordered region spans residues 33–152 (ARLAAKRAAR…DTSLSELRES (120 aa)). Residues 63–74 (KDITGTHWSRAS) are compositionally biased toward polar residues. Basic and acidic residues predominate over residues 77–105 (KRRDMMYDSIKDRSSRVSSLLDEKSDKQY). Residues 110–139 (TRPSSRNSASATTPLSGNSSRRGSGDTSSL) show a composition bias toward polar residues. Ser-114, Ser-117, Ser-125, Ser-129, and Ser-133 each carry phosphoserine. Phosphothreonine is present on Thr-136. 2 positions are modified to phosphoserine: Ser-137 and Ser-138. Coiled-coil stretches lie at residues 143-239 (DTSL…LIEK) and 282-430 (LDVR…KANR).

This sequence belongs to the LRRFIP family. Interacts with DVL3 and FLII. Weakly interacts with MYD88 in resting cells. Following LPS-stimulation, the interaction with MYD88 is rapidly enhanced; the complex gradually dissociates to basal levels after 6 hours of stimulation. Interaction with MYD88 is regulated by LPS-induced phosphorylation. In the presence of LPS, competes with FLII for MYD88-binding.

In terms of biological role, may function as activator of the canonical Wnt signaling pathway, in association with DVL3, upstream of CTNNB1/beta-catenin. Positively regulates Toll-like receptor (TLR) signaling in response to agonist probably by competing with the negative FLII regulator for MYD88-binding. The polypeptide is Leucine-rich repeat flightless-interacting protein 2 (Lrrfip2) (Rattus norvegicus (Rat)).